The following is a 251-amino-acid chain: Imidazole glycerol phosphate synthase subunit HisF (251 aa).

Catalysis depends on residues aspartate 11 and aspartate 130.

Belongs to the HisA/HisF family. In terms of assembly, heterodimer of HisH and HisF.

It localises to the cytoplasm. It carries out the reaction 5-[(5-phospho-1-deoxy-D-ribulos-1-ylimino)methylamino]-1-(5-phospho-beta-D-ribosyl)imidazole-4-carboxamide + L-glutamine = D-erythro-1-(imidazol-4-yl)glycerol 3-phosphate + 5-amino-1-(5-phospho-beta-D-ribosyl)imidazole-4-carboxamide + L-glutamate + H(+). It functions in the pathway amino-acid biosynthesis; L-histidine biosynthesis; L-histidine from 5-phospho-alpha-D-ribose 1-diphosphate: step 5/9. IGPS catalyzes the conversion of PRFAR and glutamine to IGP, AICAR and glutamate. The HisF subunit catalyzes the cyclization activity that produces IGP and AICAR from PRFAR using the ammonia provided by the HisH subunit. This chain is Imidazole glycerol phosphate synthase subunit HisF, found in Chlorobium luteolum (strain DSM 273 / BCRC 81028 / 2530) (Pelodictyon luteolum).